Consider the following 418-residue polypeptide: Histidine--tRNA ligase (418 aa).

Belongs to the class-II aminoacyl-tRNA synthetase family.

Its subcellular location is the cytoplasm. The catalysed reaction is tRNA(His) + L-histidine + ATP = L-histidyl-tRNA(His) + AMP + diphosphate + H(+). The polypeptide is Histidine--tRNA ligase (Methanococcus vannielii (strain ATCC 35089 / DSM 1224 / JCM 13029 / OCM 148 / SB)).